A 164-amino-acid chain; its full sequence is MIWRRAALAGTRLVWSRSGSAGWLDRAAGAAGAAAAAASGMESNTSSSLENLATAPVNQIQETISDNCVVIFSKTSCSYCTMAKKLFHDMNVNYKVVELDLLEYGNQFQDALYKMTGERTVPRIFVNGTFIGGATDTHRLHKEGKLLPLVHQCYLKKSKRKEFQ.

The transit peptide at 1-19 (MIWRRAALAGTRLVWSRSG) directs the protein to the mitochondrion. Ser-20 carries the post-translational modification Phosphoserine. The Glutaredoxin domain maps to 57–157 (VNQIQETISD…PLVHQCYLKK (101 aa)). Cys-68 lines the [2Fe-2S] cluster pocket. Lys-74 lines the glutathione pocket. Cys-77 carries the S-glutathionyl cysteine; alternate modification. A disulfide bridge links Cys-77 with Cys-80. Positions 109 and 121 each coordinate glutathione. Position 153 (Cys-153) interacts with [2Fe-2S] cluster.

This sequence belongs to the glutaredoxin family. In terms of assembly, monomer; active form. Homodimer; inactive form. The homodimer is probably linked by 1 2Fe-2S cluster. As to expression, widely expressed. Expressed in brain, heart, skeletal muscle, colon, thymus, spleen, kidney, liver, small intestine, placenta and lung. Not expressed in peripheral blood leukocytes.

The protein resides in the mitochondrion. Its subcellular location is the nucleus. Its activity is regulated as follows. The 2Fe-2S present in the homodimer leads to inactivation of the enzyme. The 2Fe-2S may serve as a redox sensor: the presence of one-electron oxidants or reductants leading to the loss of the 2Fe-2S cluster, subsequent monomerization and activation of the enzyme. Unlike other glutaredoxins, it is not inhibited by oxidation of structural Cys residues. Glutathione-dependent oxidoreductase that facilitates the maintenance of mitochondrial redox homeostasis upon induction of apoptosis by oxidative stress. Involved in response to hydrogen peroxide and regulation of apoptosis caused by oxidative stress. Acts as a very efficient catalyst of monothiol reactions because of its high affinity for protein glutathione-mixed disulfides. Can receive electrons not only from glutathione (GSH), but also from thioredoxin reductase supporting both monothiol and dithiol reactions. Efficiently catalyzes both glutathionylation and deglutathionylation of mitochondrial complex I, which in turn regulates the superoxide production by the complex. Overexpression decreases the susceptibility to apoptosis and prevents loss of cardiolipin and cytochrome c release. This Homo sapiens (Human) protein is Glutaredoxin-2, mitochondrial (GLRX2).